The following is a 940-amino-acid chain: Alanine--tRNA ligase (940 aa).

Zn(2+)-binding residues include His581, His585, Cys683, and His687.

The protein belongs to the class-II aminoacyl-tRNA synthetase family. Requires Zn(2+) as cofactor.

It localises to the cytoplasm. It carries out the reaction tRNA(Ala) + L-alanine + ATP = L-alanyl-tRNA(Ala) + AMP + diphosphate. Functionally, catalyzes the attachment of alanine to tRNA(Ala) in a two-step reaction: alanine is first activated by ATP to form Ala-AMP and then transferred to the acceptor end of tRNA(Ala). Also edits incorrectly charged Ser-tRNA(Ala) and Gly-tRNA(Ala) via its editing domain. The sequence is that of Alanine--tRNA ligase from Leptospira borgpetersenii serovar Hardjo-bovis (strain L550).